Here is a 298-residue protein sequence, read N- to C-terminus: NADH-cytochrome b5 reductase 2 (298 aa).

A helical transmembrane segment spans residues 15 to 38 (FVLPVAAAAVGLASYSFTSSSFIA). An FAD-binding FR-type domain is found at 49–153 (DEWIDLKLIS…KGPFVKWKWE (105 aa)). 156-191 (QFKSIALIGGGTGITPLYQLIHEITKNPADKTQVSL) contacts FAD.

The protein belongs to the flavoprotein pyridine nucleotide cytochrome reductase family. FAD is required as a cofactor.

Its subcellular location is the mitochondrion outer membrane. The enzyme catalyses 2 Fe(III)-[cytochrome b5] + NADH = 2 Fe(II)-[cytochrome b5] + NAD(+) + H(+). May mediate the reduction of outer membrane cytochrome b5. The polypeptide is NADH-cytochrome b5 reductase 2 (MCR1) (Scheffersomyces stipitis (strain ATCC 58785 / CBS 6054 / NBRC 10063 / NRRL Y-11545) (Yeast)).